The following is a 303-amino-acid chain: UDP-3-O-acyl-N-acetylglucosamine deacetylase (303 aa).

Histidine 78, histidine 237, and aspartate 241 together coordinate Zn(2+). Catalysis depends on histidine 264, which acts as the Proton donor.

Belongs to the LpxC family. The cofactor is Zn(2+).

The catalysed reaction is a UDP-3-O-[(3R)-3-hydroxyacyl]-N-acetyl-alpha-D-glucosamine + H2O = a UDP-3-O-[(3R)-3-hydroxyacyl]-alpha-D-glucosamine + acetate. It functions in the pathway glycolipid biosynthesis; lipid IV(A) biosynthesis; lipid IV(A) from (3R)-3-hydroxytetradecanoyl-[acyl-carrier-protein] and UDP-N-acetyl-alpha-D-glucosamine: step 2/6. Catalyzes the hydrolysis of UDP-3-O-myristoyl-N-acetylglucosamine to form UDP-3-O-myristoylglucosamine and acetate, the committed step in lipid A biosynthesis. The chain is UDP-3-O-acyl-N-acetylglucosamine deacetylase from Coxiella burnetii (strain CbuK_Q154) (Coxiella burnetii (strain Q154)).